The chain runs to 143 residues: Myocilin opposite strand protein (143 aa).

A disordered region spans residues 65-111 (MATRDETITKKSGEGEEMLPSMGMDHESPSKAHLMVPPAPPPSPADA). The span at 66–78 (ATRDETITKKSGE) shows a compositional bias: basic and acidic residues.

The polypeptide is Myocilin opposite strand protein (Mus musculus (Mouse)).